We begin with the raw amino-acid sequence, 899 residues long: Nuclear factor NF-kappa-B p100 subunit (899 aa).

Phosphoserine is present on residues Ser23 and Ser161. Residues 35 to 224 (ADGPYLVIVE…QPIHDSKSPG (190 aa)) form the RHD domain. A Nuclear localization signal motif is present at residues 337–341 (RKRRK). The tract at residues 346–377 (FSQPFGGGSHMGGGSGGSAGGYGGAGGGGSLG) is GRR. A disordered region spans residues 403 to 434 (GGAQMAGSRRDTDAGEGAEEPRTPPEAPQGEP). Over residues 410 to 425 (SRRDTDAGEGAEEPRT) the composition is skewed to basic and acidic residues. A Phosphothreonine modification is found at Thr425. 6 ANK repeats span residues 487-516 (NGDT…HAQY), 526-555 (LHQT…DPTL), 559-590 (HGDS…HAVP), 599-628 (EGLY…EVEA), 633-663 (GGRT…NVNA), and 667-696 (AGNT…DIHA). The tract at residues 698–734 (NEEPLCPLPSPSTSGSDSDSEGPERDTQRNFRGHTPL) is disordered. Ser713, Ser715, and Ser717 each carry phosphoserine. One copy of the ANK 7 repeat lies at 729 to 755 (RGHTPLDLTCSTKVKTLLLNAAQNTTE). In terms of domain architecture, Death spans 764–851 (AGPGLSLGDA…EGVRLLKGPE (88 aa)). The residue at position 812 (Ser812) is a Phosphoserine. Over residues 851–865 (ETRDKLPSTEVKEDS) the composition is skewed to basic and acidic residues. The disordered stretch occupies residues 851-899 (ETRDKLPSTEVKEDSAYGSQSVEQEAEKLCPPPEPPGGLCHGHPQPQVH). Residue Lys855 forms a Glycyl lysine isopeptide (Lys-Gly) (interchain with G-Cter in ubiquitin) linkage. Residues Ser865 and Ser869 each carry the phosphoserine; by MAP3K14 modification. The span at 887-899 (GGLCHGHPQPQVH) shows a compositional bias: low complexity.

In terms of assembly, component of the NF-kappa-B RelB-p52 complex. Homodimer; component of the NF-kappa-B p52-p52 complex. Component of the NF-kappa-B p65-p52 complex. Component of the NF-kappa-B p52-c-Rel complex. NFKB2/p52 interacts with NFKBIE. Component of a complex consisting of the NF-kappa-B p50-p50 homodimer and BCL3. Directly interacts with MEN1. In terms of processing, while translation occurs, the particular unfolded structure after the GRR repeat promotes the generation of p52 making it an acceptable substrate for the proteasome. This process is known as cotranslational processing. The processed form is active and the unprocessed form acts as an inhibitor (I kappa B-like), being able to form cytosolic complexes with NF-kappa B, trapping it in the cytoplasm. Complete folding of the region downstream of the GRR repeat precludes processing. Subsequent to MAP3K14-dependent serine phosphorylation, p100 polyubiquitination occurs then triggering its proteasome-dependent processing. Post-translationally, constitutive processing is tightly suppressed by its C-terminal processing inhibitory domain, named PID, which contains the death domain. In terms of processing, ubiquitinated by TRIM55; leading to processing by VCP and subsequent ubiquitin-dependent protein degradation by the proteasome. As to expression, highly expressed in lymph nodes and thymus.

Its subcellular location is the nucleus. The protein localises to the cytoplasm. Functionally, NF-kappa-B is a pleiotropic transcription factor present in almost all cell types and is the endpoint of a series of signal transduction events that are initiated by a vast array of stimuli related to many biological processes such as inflammation, immunity, differentiation, cell growth, tumorigenesis and apoptosis. NF-kappa-B is a homo- or heterodimeric complex formed by the Rel-like domain-containing proteins RELA/p65, RELB, NFKB1/p105, NFKB1/p50, REL and NFKB2/p52. The dimers bind at kappa-B sites in the DNA of their target genes and the individual dimers have distinct preferences for different kappa-B sites that they can bind with distinguishable affinity and specificity. Different dimer combinations act as transcriptional activators or repressors, respectively. NF-kappa-B is controlled by various mechanisms of post-translational modification and subcellular compartmentalization as well as by interactions with other cofactors or corepressors. NF-kappa-B complexes are held in the cytoplasm in an inactive state complexed with members of the NF-kappa-B inhibitor (I-kappa-B) family. In a conventional activation pathway, I-kappa-B is phosphorylated by I-kappa-B kinases (IKKs) in response to different activators, subsequently degraded thus liberating the active NF-kappa-B complex which translocates to the nucleus. In a non-canonical activation pathway, the MAP3K14-activated CHUK/IKKA homodimer phosphorylates NFKB2/p100 associated with RelB, inducing its proteolytic processing to NFKB2/p52 and the formation of NF-kappa-B RelB-p52 complexes. The NF-kappa-B heterodimeric RelB-p52 complex is a transcriptional activator. The NF-kappa-B p52-p52 homodimer is a transcriptional repressor. NFKB2 appears to have dual functions such as cytoplasmic retention of attached NF-kappa-B proteins by p100 and generation of p52 by a cotranslational processing. The proteasome-mediated process ensures the production of both p52 and p100 and preserves their independent function. p52 binds to the kappa-B consensus sequence 5'-GGRNNYYCC-3', located in the enhancer region of genes involved in immune response and acute phase reactions. p52 and p100 are respectively the minor and major form; the processing of p100 being relatively poor. Isoform p49 is a subunit of the NF-kappa-B protein complex, which stimulates the HIV enhancer in synergy with p65. In concert with RELB, regulates the circadian clock by repressing the transcriptional activator activity of the CLOCK-BMAL1 heterodimer. This is Nuclear factor NF-kappa-B p100 subunit (Nfkb2) from Mus musculus (Mouse).